We begin with the raw amino-acid sequence, 61 residues long: Small ribosomal subunit protein uS14 (61 aa).

Zn(2+) is bound by residues C24, C27, C40, and C43.

The protein belongs to the universal ribosomal protein uS14 family. Zinc-binding uS14 subfamily. Part of the 30S ribosomal subunit. Contacts proteins S3 and S10. Zn(2+) serves as cofactor.

In terms of biological role, binds 16S rRNA, required for the assembly of 30S particles and may also be responsible for determining the conformation of the 16S rRNA at the A site. The polypeptide is Small ribosomal subunit protein uS14 (Leptospira biflexa serovar Patoc (strain Patoc 1 / Ames)).